The primary structure comprises 284 residues: Undecaprenyl-diphosphatase (284 aa).

8 helical membrane passes run 1 to 21 (MNWLHAIILGIVEGITEFLPV), 43 to 63 (ITAFTAIIQVGAIIAAILYFW), 88 to 108 (YTLGWGIILGSIPVGVVGLVF), 116 to 136 (LSSLWVVAIALILWSGVMWLG), 149 to 169 (IGIVDAIVIGCFQALAPLFPG), 193 to 213 (LSFFMGIPALVAAGIYESVSA), 225 to 245 (VAIGWGPTILATVVSLIVAYV), and 259 to 279 (FTGFMWYRVVVGLIIIGLILS).

It belongs to the UppP family.

It is found in the cell membrane. It carries out the reaction di-trans,octa-cis-undecaprenyl diphosphate + H2O = di-trans,octa-cis-undecaprenyl phosphate + phosphate + H(+). Functionally, catalyzes the dephosphorylation of undecaprenyl diphosphate (UPP). Confers resistance to bacitracin. The protein is Undecaprenyl-diphosphatase of Cutibacterium acnes (strain DSM 16379 / KPA171202) (Propionibacterium acnes).